Reading from the N-terminus, the 186-residue chain is MKTAQELRAGNVFMVGNDPMVVQKTEYIKGGRSSAKVSMKLKNLLTGAASETIYKADDKFDVVILSRKNCTYSYFADPMYVFMDEEFNQYEIEADNIGDALKFIVDGMEDQCEVTFYEGNPISVELPTIIVREVEYTEPAVKGDTSGKVMKTARLVGGTEIQVMSYIENGDKIEIDTRTGEFRKRA.

The protein belongs to the elongation factor P family.

It localises to the cytoplasm. The protein operates within protein biosynthesis; polypeptide chain elongation. Its function is as follows. Involved in peptide bond synthesis. Stimulates efficient translation and peptide-bond synthesis on native or reconstituted 70S ribosomes in vitro. Probably functions indirectly by altering the affinity of the ribosome for aminoacyl-tRNA, thus increasing their reactivity as acceptors for peptidyl transferase. The protein is Elongation factor P of Neisseria meningitidis serogroup A / serotype 4A (strain DSM 15465 / Z2491).